The following is a 315-amino-acid chain: MKNIIRHLSKPAYREEFKGDTSPRTAAYISNRADASLGSTYKLPLEAKFWKMSIALICFLIVSSNCFASEPLPWQVTFQPPASPIMEELHHFHNFLLYISTAIVLFVAGLLGFVCIRFNAKNNPVPAKFSHNVLIEIIWTVIPIIILVIIAVPSFRILRHAEKIPETDLTIKVVGYQWYWHYIYPDHDNLEFDSVMISDENLKPDQKRLLDVDNRIVIPENATVRFLITAGDVIHSFAVPSLGFKIDAVPGRINETWTRVAKKGVYYGQCSELCGINHGFMPIAIEVVSKEDFDNWIASKNKTAMNGKNPKLAAN.

An RPE1 insert domain is found at 6–53; the sequence is RHLSKPAYREEFKGDTSPRTAAYISNRADASLGSTYKLPLEAKFWKMS. The next 3 membrane-spanning stretches (helical) occupy residues 41 to 61, 96 to 116, and 133 to 153; these read YKLPLEAKFWKMSIALICFLI, LLYISTAIVLFVAGLLGFVCI, and VLIEIIWTVIPIIILVIIAVP. 4 residues coordinate Cu cation: His235, Cys270, Cys274, and His278.

It belongs to the cytochrome c oxidase subunit 2 family. Cu cation is required as a cofactor. Requires heme as cofactor.

It is found in the cell membrane. It carries out the reaction 4 Fe(II)-[cytochrome c] + O2 + 8 H(+)(in) = 4 Fe(III)-[cytochrome c] + 2 H2O + 4 H(+)(out). Subunits I and II form the functional core of the enzyme complex. Electrons originating in cytochrome c are transferred via heme a and Cu(A) to the binuclear center formed by heme a3 and Cu(B). This is Probable cytochrome c oxidase subunit 2 (ctaC) from Rickettsia felis (strain ATCC VR-1525 / URRWXCal2) (Rickettsia azadi).